The sequence spans 600 residues: Methionine--tRNA ligase (600 aa).

A 'HIGH' region motif is present at residues 11-21 (PYANGPRHIGH). The Zn(2+) site is built by Cys-143, Cys-146, Cys-156, and Cys-159. The 'KMSKS' region motif lies at 351–355 (KFSSS). Ser-354 is an ATP binding site.

It belongs to the class-I aminoacyl-tRNA synthetase family. MetG type 1 subfamily. Monomer. It depends on Zn(2+) as a cofactor.

It is found in the cytoplasm. The catalysed reaction is tRNA(Met) + L-methionine + ATP = L-methionyl-tRNA(Met) + AMP + diphosphate. Functionally, is required not only for elongation of protein synthesis but also for the initiation of all mRNA translation through initiator tRNA(fMet) aminoacylation. The chain is Methionine--tRNA ligase from Salinispora arenicola (strain CNS-205).